Here is a 126-residue protein sequence, read N- to C-terminus: 5-hydroxyisourate hydrolase (126 aa).

Positions 16, 54, and 123 each coordinate substrate.

The protein belongs to the transthyretin family. 5-hydroxyisourate hydrolase subfamily. Homotetramer.

The catalysed reaction is 5-hydroxyisourate + H2O = 5-hydroxy-2-oxo-4-ureido-2,5-dihydro-1H-imidazole-5-carboxylate + H(+). In terms of biological role, catalyzes the hydrolysis of 5-hydroxyisourate (HIU) to 2-oxo-4-hydroxy-4-carboxy-5-ureidoimidazoline (OHCU). This Pseudomonas aeruginosa (strain ATCC 15692 / DSM 22644 / CIP 104116 / JCM 14847 / LMG 12228 / 1C / PRS 101 / PAO1) protein is 5-hydroxyisourate hydrolase.